Reading from the N-terminus, the 139-residue chain is Small ribosomal subunit protein uS11 (139 aa).

A disordered region spans residues 118 to 139; that stretch reads EDVTPIPHDGTRPKGGRRGRRV.

The protein belongs to the universal ribosomal protein uS11 family. In terms of assembly, part of the 30S ribosomal subunit.

Functionally, located on the platform of the 30S subunit. The polypeptide is Small ribosomal subunit protein uS11 (Thermococcus sibiricus (strain DSM 12597 / MM 739)).